The primary structure comprises 502 residues: Probable zinc metalloprotease MGG_02107 (502 aa).

The first 21 residues, 1 to 21 (MRSPPGAVAALASVAAQLATA), serve as a signal peptide directing secretion. Positions 182, 202, and 235 each coordinate Zn(2+). A glycan (N-linked (GlcNAc...) asparagine) is linked at N250. A Zn(2+)-binding site is contributed by D262. The interval 284 to 307 (QGGSPAGESKERAETRASIGGEND) is disordered. 3 N-linked (GlcNAc...) asparagine glycosylation sites follow: N375, N417, and N427. Residues 414-502 (QVRNVTVDTS…KSPATMPFPG (89 aa)) form the Fibronectin type-III domain.

It belongs to the peptidase M28 family. M28B subfamily. Zn(2+) serves as cofactor.

It localises to the secreted. In Pyricularia oryzae (strain 70-15 / ATCC MYA-4617 / FGSC 8958) (Rice blast fungus), this protein is Probable zinc metalloprotease MGG_02107.